The sequence spans 300 residues: Putative zinc finger protein 705EP (300 aa).

A KRAB domain is found at 7 to 78 (VTFEDVAIDF…GREFLQDQNP (72 aa)). Residues 172–194 (YQCNLCEKAYTNCFHLRRPKMTH) form a C2H2-type 1; degenerate zinc finger. C2H2-type zinc fingers lie at residues 200–222 (YTCHLCRKAFTQCSHLRRHEKTH) and 228–250 (YKCHQCGKAFIQSFNLRRHERTH). Residues 256–278 (YECDNSGKAFSQSSGFRGNKIIH) form a C2H2-type 4; degenerate zinc finger.

Belongs to the krueppel C2H2-type zinc-finger protein family.

The protein resides in the nucleus. May be involved in transcriptional regulation. The polypeptide is Putative zinc finger protein 705EP (Homo sapiens (Human)).